We begin with the raw amino-acid sequence, 215 residues long: Pyridoxine/pyridoxamine 5'-phosphate oxidase (215 aa).

Substrate-binding positions include 9–12 (RRDY) and Lys-69. Residues 64–69 (RVLLLK), 79–80 (FS), Lys-86, and Gln-108 contribute to the FMN site. Substrate contacts are provided by Tyr-126, Arg-130, and Ser-134. FMN-binding positions include 143–144 (QS) and Trp-188. Position 194 to 196 (194 to 196 (RLH)) interacts with substrate. An FMN-binding site is contributed by Arg-198.

Belongs to the pyridoxamine 5'-phosphate oxidase family. In terms of assembly, homodimer. FMN is required as a cofactor.

It carries out the reaction pyridoxamine 5'-phosphate + O2 + H2O = pyridoxal 5'-phosphate + H2O2 + NH4(+). The enzyme catalyses pyridoxine 5'-phosphate + O2 = pyridoxal 5'-phosphate + H2O2. The protein operates within cofactor metabolism; pyridoxal 5'-phosphate salvage; pyridoxal 5'-phosphate from pyridoxamine 5'-phosphate: step 1/1. Its pathway is cofactor metabolism; pyridoxal 5'-phosphate salvage; pyridoxal 5'-phosphate from pyridoxine 5'-phosphate: step 1/1. Catalyzes the oxidation of either pyridoxine 5'-phosphate (PNP) or pyridoxamine 5'-phosphate (PMP) into pyridoxal 5'-phosphate (PLP). The polypeptide is Pyridoxine/pyridoxamine 5'-phosphate oxidase (Ectopseudomonas mendocina (strain ymp) (Pseudomonas mendocina)).